Consider the following 310-residue polypeptide: HTH-type transcriptional activator TtdR (310 aa).

The 58-residue stretch at 6-63 (PLAKDLQVLVEIVHSGSFSAAAATLGQTPAFVTKRIQILENTLATTLLNRSARGVALT) folds into the HTH lysR-type domain. A DNA-binding region (H-T-H motif) is located at residues 23–42 (FSAAAATLGQTPAFVTKRIQ).

The protein belongs to the LysR transcriptional regulatory family.

Functionally, positive regulator required for L-tartrate-dependent anaerobic growth on glycerol. Induces expression of the ttdA-ttdB-ygjE operon. The sequence is that of HTH-type transcriptional activator TtdR (ttdR) from Escherichia coli O6:K15:H31 (strain 536 / UPEC).